The following is a 187-amino-acid chain: UPF0301 protein VSAL_I0547 (187 aa).

This sequence belongs to the UPF0301 (AlgH) family.

The chain is UPF0301 protein VSAL_I0547 from Aliivibrio salmonicida (strain LFI1238) (Vibrio salmonicida (strain LFI1238)).